A 144-amino-acid polypeptide reads, in one-letter code: Large ribosomal subunit protein uL15 (144 aa).

The tract at residues 1 to 48 is disordered; that stretch reads MQLNNLKPADGSKHAKRRVGRGIGSGLGKTAGRGHKGQKSRSGGFHKV. Residues 21-31 show a composition bias toward gly residues; that stretch reads RGIGSGLGKTA.

This sequence belongs to the universal ribosomal protein uL15 family. In terms of assembly, part of the 50S ribosomal subunit.

In terms of biological role, binds to the 23S rRNA. The protein is Large ribosomal subunit protein uL15 of Cupriavidus metallidurans (strain ATCC 43123 / DSM 2839 / NBRC 102507 / CH34) (Ralstonia metallidurans).